The primary structure comprises 274 residues: Tryptase beta-2 (274 aa).

The first 19 residues, M1–A19, serve as a signal peptide directing secretion. Positions A20–G29 are cleaved as a propeptide — activation peptide. Positions I30–P271 constitute a Peptidase S1 domain. Residues C58 and C74 are joined by a disulfide bond. H73 acts as the Charge relay system in catalysis. A Phosphotyrosine modification is found at Y96. N104 carries N-linked (GlcNAc...) asparagine glycosylation. D120 functions as the Charge relay system in the catalytic mechanism. N-linked (GlcNAc...) asparagine glycosylation is present at N131. 3 cysteine pairs are disulfide-bonded: C154-C229, C187-C210, and C219-C247. S223 functions as the Charge relay system in the catalytic mechanism.

It belongs to the peptidase S1 family. Tryptase subfamily. Homotetramer. The active tetramer is converted to inactive monomers at neutral and acidic pH in the absence of heparin. Low concentrations of inactive monomers become active monomers at pH 6.0 in the presence of heparin. When the concentration of active monomers is higher, they convert to active monomers and then to active tetramers. These monomers are active and functionally distinct from the tetrameric enzyme. In contrast to the hidden active sites in the tetrameric form, the active site of the monomeric form is accessible for macromolecular proteins and inhibitors, e.g. fibrinogen which is a substrate for the monomeric but not for the tetrameric form. The monomeric form forms a complex with SERPINB6.

It localises to the secreted. The enzyme catalyses Preferential cleavage: Arg-|-Xaa, Lys-|-Xaa, but with more restricted specificity than trypsin.. Tryptase is the major neutral protease present in mast cells and is secreted upon the coupled activation-degranulation response of this cell type. Plays a role in innate immunity. This is Tryptase beta-2 (Tpsb2) from Rattus norvegicus (Rat).